The primary structure comprises 195 residues: Peroxiredoxin (195 aa).

Residues 4–162 (AMIGKPAPEF…TLRLVQAFQF (159 aa)) enclose the Thioredoxin domain. Residue C49 is the Cysteine sulfenic acid (-SOH) intermediate of the active site.

It belongs to the peroxiredoxin family. AhpC/Prx1 subfamily. In terms of assembly, homodimer; disulfide-linked, upon oxidation.

It catalyses the reaction a hydroperoxide + [thioredoxin]-dithiol = an alcohol + [thioredoxin]-disulfide + H2O. Its function is as follows. Thiol-specific peroxidase that catalyzes the reduction of hydrogen peroxide and organic hydroperoxides to water and alcohols, respectively. Plays a role in cell protection against oxidative stress by detoxifying peroxides and as sensor of hydrogen peroxide-mediated signaling events. This chain is Peroxiredoxin, found in Ascaris suum (Pig roundworm).